A 174-amino-acid chain; its full sequence is Guided entry of tail-anchored proteins factor 1 (174 aa).

Over 1–8 the chain is Lumenal; the sequence is MSSAAADH. The chain crosses the membrane as a helical span at residues 9-29; the sequence is WAWLLVLSFVFGCNVLRILLP. Topologically, residues 30–99 are cytoplasmic; sequence SFSSFMSRVL…VKARTAQLAK (70 aa). Residues 39–94 adopt a coiled-coil conformation; the sequence is LQKDAEQESQMRAEIQDMKQELSTVNMMDEFARYARLERKINKMTDKLKTHVKART. The segment at 39 to 97 is interaction with GET3/TRC40; sequence LQKDAEQESQMRAEIQDMKQELSTVNMMDEFARYARLERKINKMTDKLKTHVKARTAQL. Residues 100–120 traverse the membrane as a helical segment; the sequence is IKWVISVAFYVLQAALMISLI. Residues 121–148 are Lumenal-facing; that stretch reads WKYYSVPVAVVPSKWITPLDRLVAFPTR. The helical transmembrane segment at 149-169 threads the bilayer; sequence VAGGVGITCWILVCNKVVAIV. The Cytoplasmic segment spans residues 170–174; the sequence is LHPFS.

Belongs to the WRB/GET1 family. In terms of assembly, component of the Golgi to ER traffic (GET) complex, which is composed of GET1/WRB, CAMLG/GET2 and GET3/TRC40. Within the complex, GET1 and CAMLG form a heterotetramer which is stabilized by phosphatidylinositol binding and which binds to the GET3 homodimer. Interacts with CAMLG (via C-terminus). GET3 shows a higher affinity for CAMLG than for GET1.

Its subcellular location is the endoplasmic reticulum membrane. In terms of biological role, required for the post-translational delivery of tail-anchored (TA) proteins to the endoplasmic reticulum (ER). Together with CAMLG/GET2, acts as a membrane receptor for soluble GET3/TRC40, which recognizes and selectively binds the transmembrane domain of TA proteins in the cytosol. Required to ensure correct topology and ER insertion of CAMLG. The chain is Guided entry of tail-anchored proteins factor 1 from Homo sapiens (Human).